We begin with the raw amino-acid sequence, 425 residues long: MEIRNVKGTKDYLPEEQVLRSKIKRACEDTFERYGCKPLETPTLNMYELMSYKYGGGDEILKEIYTLQDQGKRDLALRYDLTIPFAKVVAMNPNIRLPFKRYEIGKVFRDGPIKQGRFREFIQCDVDIVGVESVMAEAELMSMAFELFQTLNLEVTIQYNNRKLLNGILQAINIPTELTSDVILSLDKIEKIGIDGVRKDVLERGISEEMADTICNTVLSCLQLSIADFKEAFNNPLVADGVNELQQLQQYLIALGINENTIFNPFLARGLTMYTGTVYEIFLKDGSITSSIGSGGRYDNIIGAFRGDDMSYPTVGISFGLDVIYTALSQKETISSTADVFIIPLGTELQCLQIAQQLRSTTSLKIELELAGRKLKRALNYANKENIPYVLIIGEEEICTETVMLRNMKEGSEVKVPLSSLSNYL.

This sequence belongs to the class-II aminoacyl-tRNA synthetase family. As to quaternary structure, homodimer.

It is found in the cytoplasm. The enzyme catalyses tRNA(His) + L-histidine + ATP = L-histidyl-tRNA(His) + AMP + diphosphate + H(+). This Bacillus anthracis protein is Histidine--tRNA ligase 1.